We begin with the raw amino-acid sequence, 180 residues long: Pyruvate synthase subunit PorC (180 aa).

In terms of assembly, heterotetramer of one alpha, one beta, one delta and one gamma chain.

It catalyses the reaction 2 oxidized [2Fe-2S]-[ferredoxin] + pyruvate + CoA = 2 reduced [2Fe-2S]-[ferredoxin] + acetyl-CoA + CO2 + H(+). In Methanothermobacter thermautotrophicus (strain ATCC 29096 / DSM 1053 / JCM 10044 / NBRC 100330 / Delta H) (Methanobacterium thermoautotrophicum), this protein is Pyruvate synthase subunit PorC (porC).